The chain runs to 183 residues: Ribosome rescue factor SmrB (183 aa).

In terms of domain architecture, Smr spans 98–173 (LDLHGLTQKQ…GDAALLVLIE (76 aa)).

The protein belongs to the SmrB family. As to quaternary structure, associates with collided ribosomes, but not with correctly translating polysomes.

Acts as a ribosome collision sensor. Detects stalled/collided disomes (pairs of ribosomes where the leading ribosome is stalled and a second ribosome has collided with it) and endonucleolytically cleaves mRNA at the 5' boundary of the stalled ribosome. Stalled/collided disomes form a new interface (primarily via the 30S subunits) that binds SmrB. Cleaved mRNA becomes available for tmRNA ligation, leading to ribosomal subunit dissociation and rescue of stalled ribosomes. In Erwinia tasmaniensis (strain DSM 17950 / CFBP 7177 / CIP 109463 / NCPPB 4357 / Et1/99), this protein is Ribosome rescue factor SmrB.